Here is a 349-residue protein sequence, read N- to C-terminus: Diacylglycerol O-acyltransferase 2B (349 aa).

2 helical membrane passes run isoleucine 44–methionine 64 and tyrosine 114–threonine 134.

It belongs to the diacylglycerol acyltransferase family.

The protein resides in the endoplasmic reticulum membrane. The enzyme catalyses an acyl-CoA + a 1,2-diacyl-sn-glycerol = a triacyl-sn-glycerol + CoA. It functions in the pathway glycerolipid metabolism; triacylglycerol biosynthesis. Functionally, catalyzes the terminal and only committed step in triacylglycerol synthesis by using diacylglycerol and fatty acyl CoA as substrates. Required for storage lipid synthesis. The polypeptide is Diacylglycerol O-acyltransferase 2B (DGAT2B) (Umbelopsis ramanniana (Oleaginous fungus)).